Here is a 100-residue protein sequence, read N- to C-terminus: Proline-rich protein 15-like protein (100 aa).

Positions 26 to 100 (PDTYTQSEGG…LFDDREGKGQ (75 aa)) are disordered. The segment covering 53 to 62 (RLEKIVDKNT) has biased composition (basic and acidic residues).

The protein belongs to the PRR15 family.

The protein is Proline-rich protein 15-like protein (PRR15L) of Bos taurus (Bovine).